The chain runs to 295 residues: NAD kinase (295 aa).

Aspartate 72 (proton acceptor) is an active-site residue. NAD(+) contacts are provided by residues 72–73, 146–147, arginine 157, lysine 174, aspartate 176, 187–192, and glutamine 247; these read DG, ND, and TAYALS.

Belongs to the NAD kinase family. A divalent metal cation serves as cofactor.

The protein resides in the cytoplasm. The enzyme catalyses NAD(+) + ATP = ADP + NADP(+) + H(+). Involved in the regulation of the intracellular balance of NAD and NADP, and is a key enzyme in the biosynthesis of NADP. Catalyzes specifically the phosphorylation on 2'-hydroxyl of the adenosine moiety of NAD to yield NADP. The protein is NAD kinase of Ectopseudomonas mendocina (strain ymp) (Pseudomonas mendocina).